The chain runs to 221 residues: Ribosomal RNA small subunit methyltransferase G (221 aa).

Residues Gly-89, Leu-94, 140 to 141, and Arg-154 each bind S-adenosyl-L-methionine; that span reads VE.

The protein belongs to the methyltransferase superfamily. RNA methyltransferase RsmG family.

Its subcellular location is the cytoplasm. It catalyses the reaction guanosine(527) in 16S rRNA + S-adenosyl-L-methionine = N(7)-methylguanosine(527) in 16S rRNA + S-adenosyl-L-homocysteine. Functionally, specifically methylates the N7 position of guanine in position 527 of 16S rRNA. This Methylibium petroleiphilum (strain ATCC BAA-1232 / LMG 22953 / PM1) protein is Ribosomal RNA small subunit methyltransferase G.